The following is a 985-amino-acid chain: Regulator of telomere elongation helicase 1 homolog (985 aa).

The Helicase ATP-binding domain occupies 7–303; it reads AGIPVHFPFE…QDMAGDEPKD (297 aa). Residue 42–49 participates in ATP binding; that stretch reads SPTGTGKT. [4Fe-4S] cluster is bound by residues Cys146, Cys164, Cys173, and Cys209. The DEAH box motif lies at 252–255; that stretch reads DEAH. Residues 863 to 883 are disordered; the sequence is VKIHKRERSSPTAPESSSQVT. Residues 872-882 show a composition bias toward polar residues; sequence SPTAPESSSQV. A Phosphothreonine modification is found at Thr874.

It belongs to the helicase family. RAD3/XPD subfamily. Expressed in both male germline and somatic cells (at protein level). Expressed in ovarian germline stem cells (at protein level). Expressed in adult testes (at protein level). Expressed in the germarium including germline stem cells.

The protein localises to the nucleus. It localises to the chromosome. It catalyses the reaction ATP + H2O = ADP + phosphate + H(+). In terms of biological role, a probable ATP-dependent DNA helicase implicated in DNA repair and the maintenance of genomic stability. Acts as an anti-recombinase to counteract toxic recombination and limit crossover during meiosis. Regulates meiotic recombination and crossover homeostasis by physically dissociating strand invasion events and thereby promotes noncrossover repair by meiotic synthesis dependent strand annealing (SDSA) as well as disassembly of D loop recombination intermediates. In male germline stem cells (GSCs), plays a role in GSCs maintenance during larval germline development by modulating the expression of genes such as Stat92E and preventing DNA damage-induced checkpoint activation. May play a role in female germline stem cell maintenance. The chain is Regulator of telomere elongation helicase 1 homolog from Drosophila melanogaster (Fruit fly).